A 137-amino-acid polypeptide reads, in one-letter code: Nucleoside diphosphate kinase (137 aa).

6 residues coordinate ATP: lysine 9, phenylalanine 57, arginine 85, threonine 91, arginine 102, and asparagine 112. The Pros-phosphohistidine intermediate role is filled by histidine 115.

The protein belongs to the NDK family. Homotetramer. Mg(2+) is required as a cofactor.

It is found in the cytoplasm. It carries out the reaction a 2'-deoxyribonucleoside 5'-diphosphate + ATP = a 2'-deoxyribonucleoside 5'-triphosphate + ADP. The enzyme catalyses a ribonucleoside 5'-diphosphate + ATP = a ribonucleoside 5'-triphosphate + ADP. Major role in the synthesis of nucleoside triphosphates other than ATP. The ATP gamma phosphate is transferred to the NDP beta phosphate via a ping-pong mechanism, using a phosphorylated active-site intermediate. The sequence is that of Nucleoside diphosphate kinase from Aliarcobacter butzleri (strain RM4018) (Arcobacter butzleri).